Here is a 27-residue protein sequence, read N- to C-terminus: Phospholipase A2 P-elapitoxin-Aa1a alpha chain (27 aa).

Belongs to the phospholipase A2 family. Group I subfamily. In terms of assembly, heterotrimer of alpha, beta and gamma chains, each related to PLA2. Ca(2+) is required as a cofactor. Expressed by the venom gland.

It is found in the secreted. The catalysed reaction is a 1,2-diacyl-sn-glycero-3-phosphocholine + H2O = a 1-acyl-sn-glycero-3-phosphocholine + a fatty acid + H(+). Functionally, heterotrimer: presynaptic neurotoxin. Inhibits nerve-evoked twitch contractions but not responses to cholinergic agonists acetylcholine and carbachol and to depolarizing agonist KCl. Causes a fade in tetanic contractions. Displays a triphasic mode of action with depression, enhancement and blockade of neurotransmission. Does not display myotoxic activity such as changes in baseline muscle tension or inhibition of directly stimulated muscle twitches. All subunits are necessary for maximum toxicity. Monomer: Snake venom phospholipase A2 (PLA2) alpha chain that has enzymatic activity. PLA2 catalyzes the calcium-dependent hydrolysis of the 2-acyl groups in 3-sn-phosphoglycerides. The polypeptide is Phospholipase A2 P-elapitoxin-Aa1a alpha chain (Acanthophis antarcticus (Common death adder)).